A 558-amino-acid polypeptide reads, in one-letter code: DEAD-box ATP-dependent RNA helicase 49 (558 aa).

A Q motif motif is present at residues Phe16–Ala44. Residues Ile47 to Val226 enclose the Helicase ATP-binding domain. Ala60–Thr67 is a binding site for ATP. Residues Asp174–Asp177 carry the DEAD box motif. Residues Gln255–Asp402 enclose the Helicase C-terminal domain. A disordered region spans residues Lys506 to Leu558. Residues Ser521 to Lys530 are compositionally biased toward basic and acidic residues. The span at Gln549–Leu558 shows a compositional bias: acidic residues.

It belongs to the DEAD box helicase family. DDX55/SPB4 subfamily.

It carries out the reaction ATP + H2O = ADP + phosphate + H(+). In Arabidopsis thaliana (Mouse-ear cress), this protein is DEAD-box ATP-dependent RNA helicase 49 (RH49).